The sequence spans 411 residues: Putative odorant receptor 59c (411 aa).

The Cytoplasmic segment spans residues 1 to 46 (MTKFFFKRLQTAPLDQEVSSLDASDYYYRIAFFLGWTPPKGALLRW). Residues 47–67 (IYSLWTLTTMWLGIVYLPLGL) form a helical membrane-spanning segment. Residues 68–86 (SLTYVKHFDRFTPTEFLTS) are Extracellular-facing. Residues 87 to 107 (LQVDINCIGNVIKSCVTYSQM) traverse the membrane as a helical segment. Residues 108-139 (WRFRRMNELISSLDKRCVTTTQRRIFHKMVAR) lie on the Cytoplasmic side of the membrane. The helical transmembrane segment at 140–160 (VNLIVILFLSTYLGFCFLTLF) threads the bilayer. At 161–185 (TSVFAGKAPWQLYNPLVDWRKGHWQ) the chain is on the extracellular side. A helical transmembrane segment spans residues 186–206 (LWIASILEYCVVSIGTMQELM). Topologically, residues 207-271 (SDTYAIVFIS…QIIRPILSIT (65 aa)) are cytoplasmic. A helical membrane pass occupies residues 272–292 (IFAQFMLVGIDLGLAAISILF). Residues 293–296 (FPNT) lie on the Extracellular side of the membrane. Residues 297–317 (IWTIMANVSFIVAICTESFPC) traverse the membrane as a helical segment. The Cytoplasmic portion of the chain corresponds to 318–369 (CMLCEHLIEDSVHVSNALFHSNWITADRSYKSAVLYFLHRAQQPIQFTAGSI). Residues 370-390 (FPISVQSNIAVAKFAFTIITI) traverse the membrane as a helical segment. Residues 391–411 (VNQMNLGEKFFSDRSNGDINP) are Extracellular-facing.

Belongs to the insect chemoreceptor superfamily. Heteromeric odorant receptor channel (TC 1.A.69) family. Or2a subfamily. In terms of assembly, interacts with Orco. Complexes exist early in the endomembrane system in olfactory sensory neurons (OSNs), coupling these complexes to the conserved ciliary trafficking pathway. Expressed in olfactory sensory neurons in the maxillary palp.

It is found in the cell membrane. In terms of biological role, odorant receptor which mediates acceptance or avoidance behavior, depending on its substrates. The odorant receptor repertoire encodes a large collection of odor stimuli that vary widely in identity, intensity, and duration. May form a complex with Orco to form odorant-sensing units, providing sensitive and prolonged odorant signaling and calcium permeability. The sequence is that of Putative odorant receptor 59c (Or59c) from Drosophila melanogaster (Fruit fly).